Reading from the N-terminus, the 214-residue chain is Uracil phosphoribosyltransferase (214 aa).

Residues R81, R106, and 133–141 (DPMLATGNS) contribute to the 5-phospho-alpha-D-ribose 1-diphosphate site. Uracil contacts are provided by residues I196 and 201–203 (GDA). A 5-phospho-alpha-D-ribose 1-diphosphate-binding site is contributed by D202.

This sequence belongs to the UPRTase family. Mg(2+) serves as cofactor.

It carries out the reaction UMP + diphosphate = 5-phospho-alpha-D-ribose 1-diphosphate + uracil. The protein operates within pyrimidine metabolism; UMP biosynthesis via salvage pathway; UMP from uracil: step 1/1. With respect to regulation, allosterically activated by GTP. In terms of biological role, catalyzes the conversion of uracil and 5-phospho-alpha-D-ribose 1-diphosphate (PRPP) to UMP and diphosphate. This chain is Uracil phosphoribosyltransferase, found in Legionella pneumophila (strain Paris).